The primary structure comprises 346 residues: Probable long-chain-alcohol O-fatty-acyltransferase 6 (346 aa).

8 helical membrane-spanning segments follow: residues 7-27 (LFIQVWVSAIISVTYCYYLTP), 36-56 (LLSVLPVCVLFLIIPIFFSTV), 59-79 (SFTIAFFLSGLAVPKLILFAL), 116-136 (FPKWVFALKVFIFGALLLQAY), 146-166 (FLLGLYALHIYLELEISLTLI), 228-248 (FFAIFATFLVSGVAHEILYFY), 255-275 (TWEVTWFFVLHGFCMAAEVAL), and 289-309 (PAVSRLLTVGFVFVTGVWLFS).

This sequence belongs to the wax synthase family.

Its subcellular location is the membrane. It carries out the reaction a long chain fatty alcohol + a fatty acyl-CoA = a wax ester + CoA. Its function is as follows. Catalyzes the final step in the synthesis of long-chain linear esters (waxes). This Arabidopsis thaliana (Mouse-ear cress) protein is Probable long-chain-alcohol O-fatty-acyltransferase 6 (AT6).